The primary structure comprises 529 residues: Bifunctional purine biosynthesis protein PurH (529 aa).

The 148-residue stretch at 1 to 148 (MNNARPIRRA…KNHKDTTIIV (148 aa)) folds into the MGS-like domain.

It belongs to the PurH family.

It catalyses the reaction (6R)-10-formyltetrahydrofolate + 5-amino-1-(5-phospho-beta-D-ribosyl)imidazole-4-carboxamide = 5-formamido-1-(5-phospho-D-ribosyl)imidazole-4-carboxamide + (6S)-5,6,7,8-tetrahydrofolate. It carries out the reaction IMP + H2O = 5-formamido-1-(5-phospho-D-ribosyl)imidazole-4-carboxamide. Its pathway is purine metabolism; IMP biosynthesis via de novo pathway; 5-formamido-1-(5-phospho-D-ribosyl)imidazole-4-carboxamide from 5-amino-1-(5-phospho-D-ribosyl)imidazole-4-carboxamide (10-formyl THF route): step 1/1. The protein operates within purine metabolism; IMP biosynthesis via de novo pathway; IMP from 5-formamido-1-(5-phospho-D-ribosyl)imidazole-4-carboxamide: step 1/1. The chain is Bifunctional purine biosynthesis protein PurH from Shewanella piezotolerans (strain WP3 / JCM 13877).